Consider the following 343-residue polypeptide: Putative dihydroflavonol 4-reductase (343 aa).

Tyrosine 150 serves as a coordination point for NADP(+).

This sequence belongs to the NAD(P)-dependent epimerase/dehydratase family. Dihydroflavonol-4-reductase subfamily.

The catalysed reaction is a (2R,3S,4S)-leucoanthocyanidin + NADP(+) = a (2R,3R)-dihydroflavonol + NADPH + H(+). It functions in the pathway secondary metabolite biosynthesis; flavonoid biosynthesis. The chain is Putative dihydroflavonol 4-reductase (dfrA) from Synechocystis sp. (strain ATCC 27184 / PCC 6803 / Kazusa).